A 61-amino-acid polypeptide reads, in one-letter code: Short neurotoxin 1 (61 aa).

Over residues 1–16 (MECHNQQSSQPPTTKT) the composition is skewed to polar residues. Residues 1 to 20 (MECHNQQSSQPPTTKTCPGE) are disordered. Intrachain disulfides connect C3–C23, C17–C40, C42–C53, and C54–C59.

This sequence belongs to the three-finger toxin family. Short-chain subfamily. Type I alpha-neurotoxin sub-subfamily. In terms of tissue distribution, expressed by the venom gland.

It localises to the secreted. In terms of biological role, binds to muscle nicotinic acetylcholine receptor (nAChR) and inhibit acetylcholine from binding to the receptor, thereby impairing neuromuscular transmission. This chain is Short neurotoxin 1, found in Naja melanoleuca (Forest cobra).